The chain runs to 277 residues: Caspase-3 (277 aa).

Position 1 is an N-acetylmethionine (M1). 2 propeptides span residues 1 to 9 (MENNETSVD) and 10 to 28 (SKSI…KSMD). The residue at position 11 (K11) is an N6-acetyllysine. A Phosphoserine modification is found at S26. Catalysis depends on residues H121 and C163. S-nitrosocysteine; in inhibited form is present on C163.

This sequence belongs to the peptidase C14A family. In terms of assembly, heterotetramer that consists of two anti-parallel arranged heterodimers, each one formed by a 17 kDa (p17) and a 12 kDa (p12) subunit. Interacts with BIRC6/bruce. In terms of processing, cleavage by granzyme B, caspase-6, caspase-8 and caspase-10 generates the two active subunits. Additional processing of the propeptides is likely due to the autocatalytic activity of the activated protease. Active heterodimers between the small subunit of caspase-7 protease and the large subunit of caspase-3 also occur and vice versa. S-nitrosylated on its catalytic site cysteine in unstimulated cell lines and denitrosylated upon activation of the Fas apoptotic pathway, associated with an increase in intracellular caspase activity. Fas therefore activates caspase-3 not only by inducing the cleavage of the caspase zymogen to its active subunits, but also by stimulating the denitrosylation of its active site thiol. Post-translationally, ubiquitinated by BIRC6; this activity is inhibited by DIABLO/SMAC.

It localises to the cytoplasm. It catalyses the reaction Strict requirement for an Asp residue at positions P1 and P4. It has a preferred cleavage sequence of Asp-Xaa-Xaa-Asp-|- with a hydrophobic amino-acid residue at P2 and a hydrophilic amino-acid residue at P3, although Val or Ala are also accepted at this position.. Its activity is regulated as follows. Inhibited by BIRC6; following inhibition of BIRC6-caspase binding by DIABLO/SMAC, BIRC6 is subjected to caspase cleavage, leading to an increase in active caspases. Its function is as follows. Involved in the activation cascade of caspases responsible for apoptosis execution. At the onset of apoptosis, it proteolytically cleaves poly(ADP-ribose) polymerase PARP1 at a '216-Asp-|-Gly-217' bond. Cleaves and activates sterol regulatory element binding proteins (SREBPs) between the basic helix-loop-helix leucine zipper domain and the membrane attachment domain. Cleaves and activates caspase-6, -7 and -9 (CASP6, CASP7 and CASP9, respectively). Cleaves and inactivates interleukin-18 (IL18). Triggers cell adhesion in sympathetic neurons through RET cleavage. Cleaves IL-1 beta between an Asp and an Ala, releasing the mature cytokine which is involved in a variety of inflammatory processes. Cleaves and inhibits serine/threonine-protein kinase AKT1 in response to oxidative stress. Acts as an inhibitor of type I interferon production during virus-induced apoptosis by mediating cleavage of antiviral proteins CGAS, IRF3 and MAVS, thereby preventing cytokine overproduction. Also involved in pyroptosis by mediating cleavage and activation of gasdermin-E (GSDME). Cleaves XRCC4 and phospholipid scramblase proteins XKR4, XKR8 and XKR9, leading to promote phosphatidylserine exposure on apoptotic cell surface. Cleaves BIRC6 following inhibition of BIRC6-caspase binding by DIABLO/SMAC. The sequence is that of Caspase-3 (CASP3) from Mesocricetus auratus (Golden hamster).